Consider the following 207-residue polypeptide: ATP-dependent Clp protease proteolytic subunit (207 aa).

A propeptide spanning residues 1–14 (MSYSGERDNLAPHM) is cleaved from the precursor. The Nucleophile role is filled by S111. Residue H136 is part of the active site.

The protein belongs to the peptidase S14 family. In terms of assembly, fourteen ClpP subunits assemble into 2 heptameric rings which stack back to back to give a disk-like structure with a central cavity, resembling the structure of eukaryotic proteasomes. Component of the ClpAP and ClpXP complexes.

It is found in the cytoplasm. It carries out the reaction Hydrolysis of proteins to small peptides in the presence of ATP and magnesium. alpha-casein is the usual test substrate. In the absence of ATP, only oligopeptides shorter than five residues are hydrolyzed (such as succinyl-Leu-Tyr-|-NHMec, and Leu-Tyr-Leu-|-Tyr-Trp, in which cleavage of the -Tyr-|-Leu- and -Tyr-|-Trp bonds also occurs).. In terms of biological role, cleaves peptides in various proteins in a process that requires ATP hydrolysis. Has a chymotrypsin-like activity. Plays a major role in the degradation of misfolded proteins. The polypeptide is ATP-dependent Clp protease proteolytic subunit (Salmonella paratyphi A (strain ATCC 9150 / SARB42)).